Reading from the N-terminus, the 417-residue chain is Serine hydroxymethyltransferase (417 aa).

(6S)-5,6,7,8-tetrahydrofolate is bound by residues leucine 121 and 125–127 (GHL). Lysine 229 carries the post-translational modification N6-(pyridoxal phosphate)lysine. Position 355–357 (355–357 (SPF)) interacts with (6S)-5,6,7,8-tetrahydrofolate.

This sequence belongs to the SHMT family. Homodimer. Requires pyridoxal 5'-phosphate as cofactor.

It is found in the cytoplasm. The enzyme catalyses (6R)-5,10-methylene-5,6,7,8-tetrahydrofolate + glycine + H2O = (6S)-5,6,7,8-tetrahydrofolate + L-serine. The protein operates within one-carbon metabolism; tetrahydrofolate interconversion. It participates in amino-acid biosynthesis; glycine biosynthesis; glycine from L-serine: step 1/1. Functionally, catalyzes the reversible interconversion of serine and glycine with tetrahydrofolate (THF) serving as the one-carbon carrier. This reaction serves as the major source of one-carbon groups required for the biosynthesis of purines, thymidylate, methionine, and other important biomolecules. Also exhibits THF-independent aldolase activity toward beta-hydroxyamino acids, producing glycine and aldehydes, via a retro-aldol mechanism. This chain is Serine hydroxymethyltransferase, found in Yersinia enterocolitica serotype O:8 / biotype 1B (strain NCTC 13174 / 8081).